A 550-amino-acid polypeptide reads, in one-letter code: Solute carrier family 22 member 6 (550 aa).

Residues 1–9 are Cytoplasmic-facing; it reads MAFNDLLQQ. Residues 10–30 form a helical membrane-spanning segment; it reads VGGVGRFQQIQVTLVVLPLLL. At 31–135 the chain is on the extracellular side; sequence MASHNTLQNF…LVCSHRALRQ (105 aa). N-linked (GlcNAc...) asparagine glycosylation is found at Asn39, Asn92, and Asn113. The helical transmembrane segment at 136–156 threads the bilayer; the sequence is LAQSLYMVGVLLGAMVFGYLA. The Cytoplasmic portion of the chain corresponds to 157–164; the sequence is DRLGRRKV. Residues 165-187 traverse the membrane as a helical segment; sequence LILNYLQTAVSGTCTAFAPNFSI. Over 188–195 the chain is Extracellular; it reads YCAFRLLS. Residues 196-216 traverse the membrane as a helical segment; it reads GMSLAGISLNCMTLNVEWMPI. Topologically, residues 217 to 224 are cytoplasmic; that stretch reads HTRACVGT. A helical transmembrane segment spans residues 225–245; it reads LIGYVYSLGQFLLAGVAYAVP. Topologically, residues 246–248 are extracellular; the sequence is HWR. A helical transmembrane segment spans residues 249-269; sequence HLQLLVSAPFFAFFIYSWFFI. Over 270-337 the chain is Cytoplasmic; it reads ESARWHSSSG…ELLRCPTLRH (68 aa). The chain crosses the membrane as a helical span at residues 338–358; it reads LFLCLSMLWFATSFAYYGLVM. The Extracellular portion of the chain corresponds to 359–368; the sequence is DLQGFGVSIY. Residues 369 to 389 traverse the membrane as a helical segment; sequence LIQVIFGAVDLPAKLVGFLVI. The Cytoplasmic segment spans residues 390–395; it reads NSLGRR. The chain crosses the membrane as a helical span at residues 396 to 416; it reads PAQMAALLLAGICILLNGVIP. Residues 417-420 are Extracellular-facing; that stretch reads QDQS. The helical transmembrane segment at 421–444 threads the bilayer; the sequence is IVRTSLAVPGKGCLAASFNCIFLY. Topologically, residues 445–455 are cytoplasmic; that stretch reads TGELYPTMIRQ. The helical transmembrane segment at 456-475 threads the bilayer; sequence TGMGMGSTMARVGSIVSPLV. Over 476–484 the chain is Extracellular; that stretch reads SMTAELYPS. A helical transmembrane segment spans residues 485–505; the sequence is MPLFIYGAVPVAASAVTVLLP. Topologically, residues 506 to 550 are cytoplasmic; sequence ETLGQPLPDTVQDLESRKGKQTRQQQEHQKYMVPLQASAQEKNGL. Residues 514–550 form a disordered region; it reads DTVQDLESRKGKQTRQQQEHQKYMVPLQASAQEKNGL.

This sequence belongs to the major facilitator (TC 2.A.1) superfamily. Organic cation transporter (TC 2.A.1.19) family. Post-translationally, glycosylated. Glycosylation is necessary for proper targeting of the transporter to the plasma membrane.

The protein localises to the cell membrane. It catalyses the reaction prostaglandin F2alpha(out) = prostaglandin F2alpha(in). The enzyme catalyses prostaglandin E2(out) = prostaglandin E2(in). In terms of biological role, involved in the renal elimination of endogenous and exogenous organic anions. Functions as organic anion exchanger when the uptake of one molecule of organic anion is coupled with an efflux of one molecule of endogenous dicarboxylic acid (glutarate, ketoglutarate, etc). Mediates the transport of prostaglandin E2 (PGE2) and prostaglandin F2-alpha (PGF2-alpha) and may be involved in their renal excretion. Also mediates the sodium-independent uptake of p-aminohippurate (PAH), 2,3-dimercapto-1-propanesulfonic acid (DMPS), cidofovir, adefovir, 9-(2-phosphonylmethoxyethyl) guanine (PMEG), 9-(2-phosphonylmethoxyethyl) diaminopurine (PMEDAP), ochratoxin (OTA), acyclovir (ACV), 3'-azido-3-'deoxythymidine (AZT), cimetidine (CMD), 2,4-dichloro-phenoxyacetate (2,4-D), hippurate (HA), indoleacetate (IA), indoxyl sulfate (IS) and 3-carboxy-4-methyl-5-propyl-2-furanpropionate (CMPF) and edaravone sulfate. PAH uptake is inhibited by p-chloromercuribenzenesulphonate (PCMBS), diethyl pyrocarbonate (DEPC), indomethacin, sulindac, diclofenac, carprofen, okadaic acid, benzothiazolylcysteine (BTC), S-chlorotrifluoroethylcysteine (CTFC), cysteine S-conjugates S-dichlorovinylcysteine (DCVC), furosemide, steviol, phorbol 12-myristate 13-acetate (PMA), calcium ionophore A23187, benzylpenicillin, bumetamide, losartan, probenecid, phenol red, urate, glutarate and alpha-ketoglutarate. In Pongo abelii (Sumatran orangutan), this protein is Solute carrier family 22 member 6 (SLC22A6).